The sequence spans 276 residues: Aquaporin-1 (276 aa).

Topologically, residues 1–10 are cytoplasmic; sequence MLDAEQKKNY. Residues 11 to 31 traverse the membrane as a helical segment; sequence VAGAFGEFVGTAYFLFMGVGG. Residues 32–46 are Extracellular-facing; sequence AVNFLNNAAGSPLPG. Residues 47 to 67 form a helical membrane-spanning segment; sequence FAIPFCFGFSLFVNVFIWAPI. Topologically, residues 68–93 are cytoplasmic; the sequence is SGGVFNPSITIALMATNPKDFPWYRG. The NPA 1 signature appears at 73 to 75; that stretch reads NPS. A helical membrane pass occupies residues 94-114; the sequence is ILYIVSQFLGALFGSWLIDLI. The Extracellular portion of the chain corresponds to 115-133; the sequence is QPEAPNAATLLADGVSVAQ. Residues 134–154 form a helical membrane-spanning segment; the sequence is GLFMEMFATSVLTMAVLILAG. The Cytoplasmic portion of the chain corresponds to 155–159; sequence ERYGK. The helical transmembrane segment at 160–180 threads the bilayer; that stretch reads YLAPFGIGMSLFISALCAGPY. The Extracellular portion of the chain corresponds to 181–204; sequence TGASLNPARTLGPAIVANQYGRAH. Positions 186 to 188 match the NPA 2 motif; sequence NPA. Residues 205–225 form a helical membrane-spanning segment; it reads WIYYVGPTLGSLLAAGYWHIL. Topologically, residues 226 to 276 are cytoplasmic; that stretch reads RILNIDVVDLKNVLNKCKKCGKEDPRISLKHCEECLKDDPKPEKYDIESQN.

The protein belongs to the MIP/aquaporin (TC 1.A.8) family.

It localises to the cell membrane. The enzyme catalyses H2O(in) = H2O(out). Polyethylene glycol (PEG) stimulates whereas glycerol inhibits the aquaporin activity. Functionally, water channel required to facilitate the transport of water across membranes. Stimulates plant drought tolerance by facilitating the transport of water from the arbuscular mycorrhiza fungus to host plants. In Rhizophagus irregularis (Arbuscular mycorrhizal fungus), this protein is Aquaporin-1.